Here is a 223-residue protein sequence, read N- to C-terminus: UPF0502 protein Sbal_1765 (223 aa).

It belongs to the UPF0502 family.

This is UPF0502 protein Sbal_1765 from Shewanella baltica (strain OS155 / ATCC BAA-1091).